Here is a 316-residue protein sequence, read N- to C-terminus: Probable cell division protein WhiA (316 aa).

The segment at residues 275–309 (TLKELGEMVSGGKISKSGINHRLRKIDEIAEKLRA) is a DNA-binding region (H-T-H motif).

The protein belongs to the WhiA family.

Involved in cell division and chromosome segregation. The protein is Probable cell division protein WhiA of Bacillus cereus (strain G9842).